A 445-amino-acid polypeptide reads, in one-letter code: Xylose isomerase (445 aa).

Residues His-107 and Asp-110 contribute to the active site. 7 residues coordinate Mg(2+): Glu-238, Glu-274, His-277, Asp-302, Asp-313, Asp-315, and Asp-345.

Belongs to the xylose isomerase family. Homotetramer. It depends on Mg(2+) as a cofactor.

Its subcellular location is the cytoplasm. It catalyses the reaction alpha-D-xylose = alpha-D-xylulofuranose. The chain is Xylose isomerase from Bacillus pumilus (strain SAFR-032).